Here is a 208-residue protein sequence, read N- to C-terminus: uncharacterized protein (208 aa).

This is an uncharacterized protein from Methanocaldococcus jannaschii (strain ATCC 43067 / DSM 2661 / JAL-1 / JCM 10045 / NBRC 100440) (Methanococcus jannaschii).